Consider the following 410-residue polypeptide: Schlafen-like protein 1 (410 aa).

2 disordered regions span residues 1–20 (MSLRKRSAQTQMWESPVMSQ) and 141–199 (LHHR…SGVR). Residues 8-20 (AQTQMWESPVMSQ) show a composition bias toward polar residues. Pro residues predominate over residues 154 to 173 (SHSPGPSPGPSPGLRHPPLP). 264 to 271 (GVEDSGLV) contributes to the ATP binding site. A coiled-coil region spans residues 370–401 (QKWAMELGKLEEKVKVLTLEKEQLQQQLRQRQ).

The protein belongs to the Schlafen family. Subgroup I subfamily.

The chain is Schlafen-like protein 1 (Slfnl1) from Mus musculus (Mouse).